We begin with the raw amino-acid sequence, 1484 residues long: Cystic fibrosis transmembrane conductance regulator (1484 aa).

The Cytoplasmic segment spans residues Met1–Phe77. The helical transmembrane segment at Phe78–Gln98 threads the bilayer. In terms of domain architecture, ABC transmembrane type-1 1 spans Phe81–Ile365. Over Pro99–Tyr122 the chain is Extracellular. The helical transmembrane segment at Leu123–His146 threads the bilayer. Over His147–Leu195 the chain is Cytoplasmic. A helical transmembrane segment spans residues Ala196–Trp216. At Asp217–Ser222 the chain is on the extracellular side. Residues Ala223–Arg243 traverse the membrane as a helical segment. The Cytoplasmic segment spans residues Met244–Lys298. Residues Ala299–Phe319 traverse the membrane as a helical segment. Residues Leu320–Thr339 lie on the Extracellular side of the membrane. Residues Ile340–Val358 traverse the membrane as a helical segment. Topologically, residues Gln359 to Lys859 are cytoplasmic. Residues Trp401, Ser434, Gly458 to Thr465, and Gln493 each bind ATP. The ABC transporter 1 domain occupies Ser423–Gly646. The S-palmitoyl cysteine moiety is linked to residue Cys524. Phosphoserine occurs at positions 549 and 660. The segment at Ser654 to Glu832 is disordered R region. A Phosphoserine; by PKA modification is found at Ser670. Ser686 bears the Phosphoserine mark. Lys688 is covalently cross-linked (Glycyl lysine isopeptide (Lys-Gly) (interchain with G-Cter in ubiquitin)). Phosphoserine is present on residues Ser700, Ser712, Ser737, Ser768, Ser791, Ser796, and Ser814. A helical transmembrane segment spans residues Leu860–Val880. One can recognise an ABC transmembrane type-1 2 domain in the interval Leu860–Ser1159. Residues Gly881–Ile922 are Extracellular-facing. 3 N-linked (GlcNAc...) asparagine glycosylation sites follow: Asn893, Asn899, and Asn913. A discontinuously helical transmembrane segment spans residues Tyr923–His943. The Cytoplasmic segment spans residues Ser944 to Thr994. Residues Ile995–Leu1015 form a helical membrane-spanning segment. The Extracellular segment spans residues Gln1016–Pro1017. Residues Tyr1018–Leu1038 traverse the membrane as a helical segment. Residues Arg1039–Thr1099 are Cytoplasmic-facing. Residues Leu1100–Phe1120 traverse the membrane as a helical segment. At Ile1121–Gly1134 the chain is on the extracellular side. The chain crosses the membrane as a helical span at residues Ile1135–Ile1155. Residues Asp1156–Leu1484 lie on the Cytoplasmic side of the membrane. The 234-residue stretch at Met1212–His1445 folds into the ABC transporter 2 domain. Residues Tyr1221 and Gly1246–Ser1253 contribute to the ATP site. Residues Lys1388–Leu1484 are interaction with GORASP2. Cys1397 carries S-palmitoyl cysteine lipidation. 2 positions are modified to phosphoserine: Ser1446 and Ser1460. The segment at Leu1463–Leu1484 is disordered. Residues Glu1473–Leu1484 are compositionally biased toward acidic residues. The PDZ-binding signature appears at Thr1482 to Leu1484.

This sequence belongs to the ABC transporter superfamily. ABCC family. CFTR transporter (TC 3.A.1.202) subfamily. In terms of assembly, monomer; does not require oligomerization for channel activity. May form oligomers in the membrane. Interacts with SLC26A3, SLC26A6 and NHERF1. Interacts with SHANK2. Interacts with MYO6. Interacts (via C-terminus) with GOPC (via PDZ domain); this promotes CFTR internalization and thereby decreases channel activity. Interacts with SLC4A7 through NHERF1. Found in a complex with MYO5B and RAB11A. Interacts with ANO1. Interacts with SLC26A8. Interacts with AHCYL1; the interaction increases CFTR activity. Interacts with CSE1L. The core-glycosylated form interacts with GORASP2 (via PDZ GRASP-type 1 domain) in respone to ER stress. Interacts with MARCHF2; the interaction leads to CFTR ubiqtuitination and degradation. Interacts with ADGRG2. Post-translationally, N-glycosylated. Phosphorylated; cAMP treatment promotes phosphorylation and activates the channel. Dephosphorylation decreases the ATPase activity (in vitro). Phosphorylation at PKA sites activates the channel. Phosphorylation at PKC sites enhances the response to phosphorylation by PKA. Phosphorylated by AMPK; this inhibits channel activity. In terms of processing, ubiquitinated, leading to its degradation in the lysosome. Deubiquitination by USP10 in early endosomes enhances its endocytic recycling to the cell membrane. Ubiquitinated by RNF185 during ER stress. Ubiquitinated by MARCHF2.

It localises to the apical cell membrane. Its subcellular location is the early endosome membrane. The protein localises to the cell membrane. The protein resides in the recycling endosome membrane. It is found in the endoplasmic reticulum membrane. It localises to the nucleus. The enzyme catalyses ATP + H2O + closed Cl(-) channel = ADP + phosphate + open Cl(-) channel.. It carries out the reaction chloride(in) = chloride(out). The catalysed reaction is hydrogencarbonate(in) = hydrogencarbonate(out). It catalyses the reaction ATP + H2O = ADP + phosphate + H(+). Its function is as follows. Epithelial ion channel that plays an important role in the regulation of epithelial ion and water transport and fluid homeostasis. Mediates the transport of chloride ions across the cell membrane. Possesses an intrinsic ATPase activity and utilizes ATP to gate its channel; the passive flow of anions through the channel is gated by cycles of ATP binding and hydrolysis by the ATP-binding domains. The ion channel is also permeable to HCO(3)(-); selectivity depends on the extracellular chloride concentration. Exerts its function also by modulating the activity of other ion channels and transporters. Contributes to the regulation of the pH and the ion content of the epithelial fluid layer. Modulates the activity of the epithelial sodium channel (ENaC) complex, in part by regulating the cell surface expression of the ENaC complex. May regulate bicarbonate secretion and salvage in epithelial cells by regulating the transporter SLC4A7. Can inhibit the chloride channel activity of ANO1. Plays a role in the chloride and bicarbonate homeostasis during sperm epididymal maturation and capacitation. The polypeptide is Cystic fibrosis transmembrane conductance regulator (Ornithorhynchus anatinus (Duckbill platypus)).